Reading from the N-terminus, the 230-residue chain is Ribonuclease 1 (230 aa).

An N-terminal signal peptide occupies residues 1–22 (MKILLASLCLISLLVILPSVFS). Gln38 lines the RNA pocket. A disulfide bond links Cys44 and Cys50. RNA is bound by residues His65, Phe115, 118 to 119 (HE), and 122 to 123 (KH). Residue His65 is the Proton donor of the active site. 3 disulfide bridges follow: Cys80–Cys126, Cys186–Cys221, and Cys202–Cys213. Glu119 is a catalytic residue. His123 serves as the catalytic Proton acceptor.

The protein belongs to the RNase T2 family.

The catalysed reaction is a ribonucleotidyl-ribonucleotide-RNA + H2O = a 3'-end 3'-phospho-ribonucleotide-RNA + a 5'-end dephospho-ribonucleoside-RNA + H(+). Its function is as follows. May remobilize phosphate, particularly when cells senesce or when phosphate becomes limiting. The polypeptide is Ribonuclease 1 (RNS1) (Arabidopsis thaliana (Mouse-ear cress)).